A 72-amino-acid polypeptide reads, in one-letter code: Translation initiation factor IF-1 2 (72 aa).

The region spanning 1-72 (MAKEDAIEVD…KRGRITYRMK (72 aa)) is the S1-like domain.

It belongs to the IF-1 family. Component of the 30S ribosomal translation pre-initiation complex which assembles on the 30S ribosome in the order IF-2 and IF-3, IF-1 and N-formylmethionyl-tRNA(fMet); mRNA recruitment can occur at any time during PIC assembly.

The protein localises to the cytoplasm. In terms of biological role, one of the essential components for the initiation of protein synthesis. Stabilizes the binding of IF-2 and IF-3 on the 30S subunit to which N-formylmethionyl-tRNA(fMet) subsequently binds. Helps modulate mRNA selection, yielding the 30S pre-initiation complex (PIC). Upon addition of the 50S ribosomal subunit IF-1, IF-2 and IF-3 are released leaving the mature 70S translation initiation complex. This Nitratidesulfovibrio vulgaris (strain DP4) (Desulfovibrio vulgaris) protein is Translation initiation factor IF-1 2.